Here is a 769-residue protein sequence, read N- to C-terminus: Wall-associated receptor kinase-like 10 (769 aa).

A signal peptide spans M1–A24. Residues S25–P358 lie on the Extracellular side of the membrane. 8 N-linked (GlcNAc...) asparagine glycosylation sites follow: N58, N114, N134, N182, N187, N237, N262, and N296. The segment at C291–C351 is atypical EGF-like. Disulfide bonds link C293–C305, C327–C342, and C337–C351. A helical membrane pass occupies residues L359 to L379. The Cytoplasmic portion of the chain corresponds to Y380–R769. Residues F433–E718 form the Protein kinase domain. ATP is bound by residues L439–V447 and K461. Y506 is subject to Phosphotyrosine. Catalysis depends on D559, which acts as the Proton acceptor. Phosphothreonine is present on residues T593 and T598. At Y606 the chain carries Phosphotyrosine.

The protein belongs to the protein kinase superfamily. Ser/Thr protein kinase family.

The protein resides in the membrane. It carries out the reaction L-seryl-[protein] + ATP = O-phospho-L-seryl-[protein] + ADP + H(+). The catalysed reaction is L-threonyl-[protein] + ATP = O-phospho-L-threonyl-[protein] + ADP + H(+). Functionally, serine/threonine-protein kinase that may function as a signaling receptor of extracellular matrix component. In Arabidopsis thaliana (Mouse-ear cress), this protein is Wall-associated receptor kinase-like 10 (WAKL10).